The primary structure comprises 374 residues: Dihydroorotate dehydrogenase (quinone) (374 aa).

Residues Ala-78–Lys-82 and Thr-102 each bind FMN. Residue Lys-82 participates in substrate binding. Residue Asn-127–Phe-131 participates in substrate binding. FMN contacts are provided by Asn-159 and Asn-192. A substrate-binding site is contributed by Asn-192. The Nucleophile role is filled by Ser-195. Position 197 (Asn-197) interacts with substrate. 2 residues coordinate FMN: Lys-230 and Thr-258. A substrate-binding site is contributed by Asn-259–Thr-260. FMN-binding positions include Gly-287, Gly-316, and Tyr-337–Thr-338.

It belongs to the dihydroorotate dehydrogenase family. Type 2 subfamily. In terms of assembly, monomer. FMN serves as cofactor.

The protein resides in the cell membrane. The enzyme catalyses (S)-dihydroorotate + a quinone = orotate + a quinol. Its pathway is pyrimidine metabolism; UMP biosynthesis via de novo pathway; orotate from (S)-dihydroorotate (quinone route): step 1/1. In terms of biological role, catalyzes the conversion of dihydroorotate to orotate with quinone as electron acceptor. The chain is Dihydroorotate dehydrogenase (quinone) from Acaryochloris marina (strain MBIC 11017).